Consider the following 122-residue polypeptide: MAKTYDPNNVFARILRGEIPCKKVLETEHALAFHDINPQAPTHILVIPKGAYVDMDDFSARATEAEIAGLFRAVGEVARGAGAAEPGYRILSNCGEDANQEVPHLHIHVFAGRRLGPMITKG.

Residues 10 to 120 form the HIT domain; that stretch reads VFARILRGEI…AGRRLGPMIT (111 aa). Positions 104–108 match the Histidine triad motif motif; that stretch reads HLHIH.

This is an uncharacterized protein from Azospirillum brasilense.